The following is a 224-amino-acid chain: 7-cyano-7-deazaguanine synthase (224 aa).

12 to 22 (LSGGLDSSTVT) serves as a coordination point for ATP. Positions 193, 201, 204, and 207 each coordinate Zn(2+).

Belongs to the QueC family. Requires Zn(2+) as cofactor.

It catalyses the reaction 7-carboxy-7-deazaguanine + NH4(+) + ATP = 7-cyano-7-deazaguanine + ADP + phosphate + H2O + H(+). Its pathway is purine metabolism; 7-cyano-7-deazaguanine biosynthesis. In terms of biological role, catalyzes the ATP-dependent conversion of 7-carboxy-7-deazaguanine (CDG) to 7-cyano-7-deazaguanine (preQ(0)). This chain is 7-cyano-7-deazaguanine synthase, found in Prochlorococcus marinus (strain MIT 9312).